Here is a 395-residue protein sequence, read N- to C-terminus: DDB1- and CUL4-associated factor 4-like protein 2 (395 aa).

2 WD repeats span residues 268-307 (SHDS…CVTQ) and 312-351 (VNNS…LLTT).

This chain is DDB1- and CUL4-associated factor 4-like protein 2 (DCAF4L2), found in Homo sapiens (Human).